The sequence spans 197 residues: Holliday junction branch migration complex subunit RuvA (197 aa).

Positions 1-63 (MIEFIRGYVD…EDVLALYGFH (63 aa)) are domain I. A domain II region spans residues 64–142 (TRQERMLFAK…AIVPDAFPNL (79 aa)). The interval 143–149 (FTEPLEE) is flexible linker. Residues 149-197 (ETNALSEAIEALKALGYADKEIQKVVPMLRQERLSTEGYIKLALQKLLK) are domain III.

Belongs to the RuvA family. In terms of assembly, homotetramer. Forms an RuvA(8)-RuvB(12)-Holliday junction (HJ) complex. HJ DNA is sandwiched between 2 RuvA tetramers; dsDNA enters through RuvA and exits via RuvB. An RuvB hexamer assembles on each DNA strand where it exits the tetramer. Each RuvB hexamer is contacted by two RuvA subunits (via domain III) on 2 adjacent RuvB subunits; this complex drives branch migration. In the full resolvosome a probable DNA-RuvA(4)-RuvB(12)-RuvC(2) complex forms which resolves the HJ.

The protein localises to the cytoplasm. Functionally, the RuvA-RuvB-RuvC complex processes Holliday junction (HJ) DNA during genetic recombination and DNA repair, while the RuvA-RuvB complex plays an important role in the rescue of blocked DNA replication forks via replication fork reversal (RFR). RuvA specifically binds to HJ cruciform DNA, conferring on it an open structure. The RuvB hexamer acts as an ATP-dependent pump, pulling dsDNA into and through the RuvAB complex. HJ branch migration allows RuvC to scan DNA until it finds its consensus sequence, where it cleaves and resolves the cruciform DNA. This Anoxybacillus flavithermus (strain DSM 21510 / WK1) protein is Holliday junction branch migration complex subunit RuvA.